We begin with the raw amino-acid sequence, 512 residues long: ATP synthase subunit alpha (512 aa).

Gly-169–Thr-176 is a binding site for ATP.

The protein belongs to the ATPase alpha/beta chains family. As to quaternary structure, F-type ATPases have 2 components, CF(1) - the catalytic core - and CF(0) - the membrane proton channel. CF(1) has five subunits: alpha(3), beta(3), gamma(1), delta(1), epsilon(1). CF(0) has four main subunits: a(1), b(1), b'(1) and c(9-12).

Its subcellular location is the cell inner membrane. It carries out the reaction ATP + H2O + 4 H(+)(in) = ADP + phosphate + 5 H(+)(out). In terms of biological role, produces ATP from ADP in the presence of a proton gradient across the membrane. The alpha chain is a regulatory subunit. The sequence is that of ATP synthase subunit alpha from Cereibacter sphaeroides (strain ATCC 17025 / ATH 2.4.3) (Rhodobacter sphaeroides).